Here is a 142-residue protein sequence, read N- to C-terminus: MAKKNAGQLKLQVPAGAATPSPPIGPALGQRGINIMEFCKAFNAATQEMEKGAPIPVVITYYQDKSFTFSLKTPPVSFFLKKEANLKSGSKEPGKVFVGTISRDKICSIAEAKMKDLNANNIEAAMRMIEGSARSMGLEVVG.

Belongs to the universal ribosomal protein uL11 family. Part of the ribosomal stalk of the 50S ribosomal subunit. Interacts with L10 and the large rRNA to form the base of the stalk. L10 forms an elongated spine to which L12 dimers bind in a sequential fashion forming a multimeric L10(L12)X complex. Post-translationally, one or more lysine residues are methylated.

Forms part of the ribosomal stalk which helps the ribosome interact with GTP-bound translation factors. This Bartonella bacilliformis (strain ATCC 35685 / KC583 / Herrer 020/F12,63) protein is Large ribosomal subunit protein uL11.